The primary structure comprises 148 residues: Ubiquitin-conjugating enzyme E2 5B (148 aa).

Residues 1-147 (MASKRILKEL…ARSWTQKYAM (147 aa)) form the UBC core domain. Cys85 acts as the Glycyl thioester intermediate in catalysis.

It belongs to the ubiquitin-conjugating enzyme family.

It carries out the reaction S-ubiquitinyl-[E1 ubiquitin-activating enzyme]-L-cysteine + [E2 ubiquitin-conjugating enzyme]-L-cysteine = [E1 ubiquitin-activating enzyme]-L-cysteine + S-ubiquitinyl-[E2 ubiquitin-conjugating enzyme]-L-cysteine.. Its pathway is protein modification; protein ubiquitination. In terms of biological role, E2 conjugating enzyme that associates with the E3 ubiquitin-protein ligase EL5 to mediate ubiquitination of target proteins. This is Ubiquitin-conjugating enzyme E2 5B (UBC5B) from Oryza sativa subsp. japonica (Rice).